The chain runs to 331 residues: MSIAAKDIEPGDIPGNLTGGEFSPYHVFSAEEWSRFRADTPLTLTGEEVKRLRSLNDPVDLGEVRRIYLSLSRLLSAHVEASQILFQQRKRFLSMSDETKTPFVIGIAGSVAVGKSTTARILAELLARWPSSPKVDLITTDGFLYPNAILQRDNMMDRKGFPESYDIGALLRFLSAIKAGRPNVKAPTYSHLTYDVIPDQFQLIDRPDILIFEGINVLQSRDLPADGKIVPMVSDFFDFSIYIDAEESLIHNWYVSRFMRLRETAFQNPQSFFHRYSTISEDAARAIAEGLWHNINLKNLHQNIQPTRPRADLILQKGPSHLTQTVALRKL.

ATP is bound at residue 109–116; that stretch reads GSVAVGKS.

This sequence belongs to the prokaryotic pantothenate kinase family.

Its subcellular location is the cytoplasm. The enzyme catalyses (R)-pantothenate + ATP = (R)-4'-phosphopantothenate + ADP + H(+). It participates in cofactor biosynthesis; coenzyme A biosynthesis; CoA from (R)-pantothenate: step 1/5. The chain is Pantothenate kinase from Sinorhizobium fredii (strain NBRC 101917 / NGR234).